The primary structure comprises 314 residues: tRNA pseudouridine synthase B (314 aa).

His43 provides a ligand contact to substrate. Asp48 serves as the catalytic Nucleophile. Substrate contacts are provided by Tyr76, Tyr179, and Leu200.

It belongs to the pseudouridine synthase TruB family. Type 1 subfamily.

It carries out the reaction uridine(55) in tRNA = pseudouridine(55) in tRNA. In terms of biological role, responsible for synthesis of pseudouridine from uracil-55 in the psi GC loop of transfer RNAs. The sequence is that of tRNA pseudouridine synthase B from Escherichia coli O157:H7.